The chain runs to 231 residues: Thrombin-like enzyme leucurobin (231 aa).

Positions 1-223 (VIGGDECDIN…YLPWIQSIIA (223 aa)) constitute a Peptidase S1 domain. Disulfide bonds link C7-C139, C26-C42, C74-C230, C118-C184, C150-C163, and C174-C199. Active-site charge relay system residues include H41 and D86. N146 is a glycosylation site (N-linked (GlcNAc...) asparagine). The active-site Charge relay system is the S178. N225 is a glycosylation site (N-linked (GlcNAc...) asparagine).

The protein belongs to the peptidase S1 family. Snake venom subfamily. In terms of assembly, monomer. In terms of processing, glycosylated. As to expression, expressed by the venom gland.

It localises to the secreted. The enzyme catalyses Selective cleavage of Arg-|-Xaa bond in fibrinogen, to form fibrin, and release fibrinopeptide A. The specificity of further degradation of fibrinogen varies with species origin of the enzyme.. With respect to regulation, inhibited by PMSF and benzamidine. Its clotting effect is strongly inhibited by antibothropic serum. Is not inhibited by heparin. Functionally, thrombin-like snake venom serine protease that cleaves Arg-Gly bonds in alpha-chain of fibrinogen (FGA). Induces temporary episodes of opisthotonos and rapid rolling around the long axis of the animal (gyroxin-like effect), when injected into the tail veins of mice (0.143 ug/g mouse). The polypeptide is Thrombin-like enzyme leucurobin (Bothrops leucurus (Whitetail lancehead)).